Consider the following 548-residue polypeptide: MKTLETQPLAPDCCPSDQDPAPAHPSPHASPMNKNADSELMPPPPERGDPPRLSPDPVAGSAVSQELREGDPVSLSTPLETEFGSPSELSPRIEEQELSENTSLPAEEANGSLSEEEANGPELGSGKAMEDTSGEPAAEDEGDTAWNYSFSQLPRFLSGSWSEFSTQPENFLKGCKWAPDGSCILTNSADNILRIYNLPPELYHEGEQVEYAEMVPVLRMVEGDTIYDYCWYSLMSSAQPDTSYVASSSRENPIHIWDAFTGELRASFRAYNHLDELTAAHSLCFSPDGSQLFCGFNRTVRVFSTARPGRDCEVRATFAKKQGQSGIISCIAFSPAQPLYACGSYGRSLGLYAWDDGSPLALLGGHQGGITHLCFHPDGNRFFSGARKDAELLCWDLRQSGYPLWSLGREVTTNQRIYFDLDPTGQFLVSGSTSGAVSVWDTDGPGNDGKPEPVLSFLPQKDCTNGVSLHPSLPLLATASGQRVFPEPTESGDEGEELGLPLLSTRHVHLECRLQLWWCGGAPDSSIPDDHQGEKGQGGTEGGVGELI.

The segment at 1–142 (MKTLETQPLA…SGEPAAEDEG (142 aa)) is disordered. Residues 15-31 (PSDQDPAPAHPSPHASP) show a composition bias toward low complexity. S26, S30, and S54 each carry phosphoserine. S64 is modified (phosphoserine; by ATM). Residues S85, S90, S112, and S114 each carry the phosphoserine modification. WD repeat units lie at residues 167-206 (QPENFLKGCKWAPDGSCILTNSADNILRIYNLPPELYHEG), 222-267 (EGDT…LRAS), 272-313 (NHLD…RDCE), 323-364 (GQSG…ALLG), 365-405 (GHQG…YPLW), and 411-450 (VTTNQRIYFDLDPTGQFLVSGSTSGAVSVWDTDGPGNDGK). A Phosphothreonine modification is found at T489. Position 491 is a phosphoserine (S491). Residues 526–548 (SIPDDHQGEKGQGGTEGGVGELI) form a disordered region. Over residues 535–548 (KGQGGTEGGVGELI) the composition is skewed to gly residues.

It belongs to the TCAB1 family. Component of the telomerase holoenzyme complex composed of one molecule of TERT, one molecule of WRAP53/TCAB1, two molecules of H/ACA ribonucleoprotein complex subunits DKC1, NOP10, NHP2 and GAR1, and a telomerase RNA template component (TERC). The telomerase holoenzyme complex is associated with TEP1, SMG6/EST1A and POT1. Interacts with the chaperonin-containing T-complex (TRiC) complex; which mediates the folding of WRAP53/TCAB1. Interacts with COIL. Interacts with SMN1. Interacts with RNF8. Interacts with histone H2AX. Post-translationally, phosphorylated at Ser-64 by ATM in response to DNA damage, promoting its interaction with histone H2AX and localization to sites of DNA double-strand breaks. As to expression, expressed in all tissues and cell lines examined.

The protein resides in the nucleus. Its subcellular location is the cajal body. It localises to the chromosome. The protein localises to the telomere. RNA chaperone that plays a key role in telomere maintenance and RNA localization to Cajal bodies. Specifically recognizes and binds the Cajal body box (CAB box) present in both small Cajal body RNAs (scaRNAs) and telomerase RNA template component (TERC). Essential component of the telomerase holoenzyme complex, a ribonucleoprotein complex essential for the replication of chromosome termini that elongates telomeres in most eukaryotes. In the telomerase holoenzyme complex, required to stimulate the catalytic activity of the complex. Acts by specifically binding the CAB box of the TERC RNA and controlling the folding of the CR4/CR5 region of the TERC RNA, a critical step for telomerase activity. In addition, also controls telomerase holoenzyme complex localization to Cajal body. During S phase, required for delivery of TERC to telomeres during S phase and for telomerase activity. In addition to its role in telomere maintenance, also required for Cajal body formation, probably by mediating localization of scaRNAs to Cajal bodies. Also plays a role in DNA repair: phosphorylated by ATM in response to DNA damage and relocalizes to sites of DNA double-strand breaks to promote the repair of DNA double-strand breaks. Acts by recruiting the ubiquitin ligase RNF8 to DNA breaks and promote both homologous recombination (HR) and non-homologous end joining (NHEJ). This is Telomerase Cajal body protein 1 from Homo sapiens (Human).